The sequence spans 274 residues: Dermonecrotic toxin LarSicTox-alphaIB2bii (274 aa).

His-3 is an active-site residue. The Mg(2+) site is built by Glu-23 and Asp-25. Catalysis depends on His-39, which acts as the Nucleophile. 2 disulfide bridges follow: Cys-43–Cys-49 and Cys-45–Cys-188. Residue Asp-83 participates in Mg(2+) binding. A glycan (N-linked (GlcNAc...) asparagine) is linked at Asn-251.

The protein belongs to the arthropod phospholipase D family. Class II subfamily. The cofactor is Mg(2+). As to expression, expressed by the venom gland.

It is found in the secreted. It catalyses the reaction an N-(acyl)-sphingosylphosphocholine = an N-(acyl)-sphingosyl-1,3-cyclic phosphate + choline. The enzyme catalyses an N-(acyl)-sphingosylphosphoethanolamine = an N-(acyl)-sphingosyl-1,3-cyclic phosphate + ethanolamine. It carries out the reaction a 1-acyl-sn-glycero-3-phosphocholine = a 1-acyl-sn-glycero-2,3-cyclic phosphate + choline. The catalysed reaction is a 1-acyl-sn-glycero-3-phosphoethanolamine = a 1-acyl-sn-glycero-2,3-cyclic phosphate + ethanolamine. Functionally, dermonecrotic toxins cleave the phosphodiester linkage between the phosphate and headgroup of certain phospholipids (sphingolipid and lysolipid substrates), forming an alcohol (often choline) and a cyclic phosphate. This toxin acts on sphingomyelin (SM). It may also act on ceramide phosphoethanolamine (CPE), lysophosphatidylcholine (LPC) and lysophosphatidylethanolamine (LPE), but not on lysophosphatidylserine (LPS), and lysophosphatidylglycerol (LPG). It acts by transphosphatidylation, releasing exclusively cyclic phosphate products as second products. Induces dermonecrosis, hemolysis, increased vascular permeability, edema, inflammatory response, and platelet aggregation. The sequence is that of Dermonecrotic toxin LarSicTox-alphaIB2bii from Loxosceles arizonica (Arizona brown spider).